A 235-amino-acid polypeptide reads, in one-letter code: Small ribosomal subunit protein uS2c (235 aa).

It belongs to the universal ribosomal protein uS2 family.

The protein localises to the plastid. The protein resides in the chloroplast. In Cryptomeria japonica (Japanese cedar), this protein is Small ribosomal subunit protein uS2c (rps2).